Here is a 339-residue protein sequence, read N- to C-terminus: Transmembrane protein 120B (339 aa).

Residues 1–77 (MSGQLERCER…ASREEAELVQ (77 aa)) are a coiled coil. 6 helical membrane-spanning segments follow: residues 102–124 (GLYL…AKFA), 132–152 (FKLY…FFLH), 159–179 (VFNF…SILI), 187–207 (GWWV…LTWP), 270–290 (FLLP…VTLF), and 302–322 (QVFV…LTTL).

This sequence belongs to the TMEM120 family. In terms of assembly, heterooligomer with TMEM120A.

Its subcellular location is the nucleus inner membrane. Necessary for efficient adipogenesis. Does not show ion channel activity. This is Transmembrane protein 120B (TMEM120B) from Bos taurus (Bovine).